The following is a 761-amino-acid chain: Xaa-Pro dipeptidyl-peptidase (761 aa).

Residues Ser-349, Asp-469, and His-499 each act as charge relay system in the active site.

Belongs to the peptidase S15 family. As to quaternary structure, homodimer.

Its subcellular location is the cytoplasm. The catalysed reaction is Hydrolyzes Xaa-Pro-|- bonds to release unblocked, N-terminal dipeptides from substrates including Ala-Pro-|-p-nitroanilide and (sequentially) Tyr-Pro-|-Phe-Pro-|-Gly-Pro-|-Ile.. Removes N-terminal dipeptides sequentially from polypeptides having unsubstituted N-termini provided that the penultimate residue is proline. The protein is Xaa-Pro dipeptidyl-peptidase of Streptococcus equi subsp. zooepidemicus (strain H70).